We begin with the raw amino-acid sequence, 622 residues long: Threonine--tRNA ligase (622 aa).

The interval 1–141 is editing domain; sequence MKTLLIHSDY…SRKITTERKE (141 aa). The tract at residues 199–498 is catalytic; it reads PHVKYIKEKE…TLENKPPALP (300 aa). Zn(2+) contacts are provided by Cys-291, His-343, and His-467.

It belongs to the class-II aminoacyl-tRNA synthetase family. As to quaternary structure, homodimer. Zn(2+) is required as a cofactor.

It is found in the cytoplasm. The catalysed reaction is tRNA(Thr) + L-threonine + ATP = L-threonyl-tRNA(Thr) + AMP + diphosphate + H(+). Catalyzes the attachment of threonine to tRNA(Thr) in a two-step reaction: L-threonine is first activated by ATP to form Thr-AMP and then transferred to the acceptor end of tRNA(Thr). Also edits incorrectly charged L-seryl-tRNA(Thr). The chain is Threonine--tRNA ligase from Methanococcus maripaludis (strain C5 / ATCC BAA-1333).